The following is a 1159-amino-acid chain: Protocadherin-17 (1159 aa).

Positions 1-17 (MYLSICCCFLLWAPALT) are cleaved as a signal peptide. 6 Cadherin domains span residues 18 to 132 (LKNL…APSF), 133 to 243 (SSDQ…SPVF), 244 to 351 (EAPS…APSI), 353 to 472 (FVSV…PPRF), 473 to 583 (TKGL…APVI), and 589 to 695 (QNDT…VPRV). The Extracellular portion of the chain corresponds to 18-707 (LKNLNYSVPE…EQHHWDMSLP (690 aa)). N22 is a glycosylation site (N-linked (GlcNAc...) asparagine). Residues 186-188 (RGD) carry the Cell attachment site motif. N-linked (GlcNAc...) asparagine glycosylation is found at N266, N439, N453, N504, N566, and N590. A helical transmembrane segment spans residues 708–728 (LIVTLSTISIILLAAMITIAV). Residues 729 to 1159 (KCKRENKEIR…RGNDPVAVRK (431 aa)) are Cytoplasmic-facing. Disordered stretches follow at residues 858–909 (NFPA…KGSC) and 1108–1132 (SRDSSEMGAVLEQLDHPNRDLGRES). Residues 867 to 879 (GSRQQFVQSSSTF) are compositionally biased toward polar residues. 2 stretches are compositionally biased toward basic and acidic residues: residues 880–895 (KDPERASLRDSGHGDS) and 1120–1132 (QLDHPNRDLGRES).

It is found in the cell membrane. Potential calcium-dependent cell-adhesion protein. This is Protocadherin-17 (PCDH17) from Homo sapiens (Human).